We begin with the raw amino-acid sequence, 256 residues long: MLNIGPFSFHSRLLLGTGKFPDFDVQQKAIDVSEAEILTFAVRRMDIFDAKQPNLLEKLDVKKYTLLPNTAGAKNAEEAVRIAKLAKASGLCDMIKVEVIGDDRTLLPDPVETLKASEMLLEEGFIVLPYTSDDVVLARKLQELGVHAIMPGASPIGSGLGIVNPLNLSFIIEQATVPVIVDAGIGSPADAAFAMELGADGVLLNTAVSGAKDPIKMAQAMKLSIEAGRLGFEAGRIARKRCATASSPLEGMSVVE.

The Schiff-base intermediate with DXP role is filled by lysine 96. 1-deoxy-D-xylulose 5-phosphate-binding positions include glycine 157, 183-184, and 205-206; these read AG and NT.

Belongs to the ThiG family. Homotetramer. Forms heterodimers with either ThiH or ThiS.

The protein resides in the cytoplasm. It carries out the reaction [ThiS sulfur-carrier protein]-C-terminal-Gly-aminoethanethioate + 2-iminoacetate + 1-deoxy-D-xylulose 5-phosphate = [ThiS sulfur-carrier protein]-C-terminal Gly-Gly + 2-[(2R,5Z)-2-carboxy-4-methylthiazol-5(2H)-ylidene]ethyl phosphate + 2 H2O + H(+). The protein operates within cofactor biosynthesis; thiamine diphosphate biosynthesis. Functionally, catalyzes the rearrangement of 1-deoxy-D-xylulose 5-phosphate (DXP) to produce the thiazole phosphate moiety of thiamine. Sulfur is provided by the thiocarboxylate moiety of the carrier protein ThiS. In vitro, sulfur can be provided by H(2)S. The protein is Thiazole synthase of Bacillus cereus (strain G9842).